The sequence spans 140 residues: Large ribosomal subunit protein bL17 (140 aa).

Residues 120-140 (EDAKGQDSGPVMVDEDDFAEA) are disordered.

It belongs to the bacterial ribosomal protein bL17 family. As to quaternary structure, part of the 50S ribosomal subunit. Contacts protein L32.

This Erythrobacter litoralis (strain HTCC2594) protein is Large ribosomal subunit protein bL17.